The following is a 377-amino-acid chain: N5-carboxyaminoimidazole ribonucleotide synthase (377 aa).

ATP is bound by residues Arg93, Lys133, 138-144 (GYDGKGQ), 175-178 (EEFV), Glu183, His206, and 257-258 (NE). In terms of domain architecture, ATP-grasp spans 97–287 (KALLDRAQVA…QFENHLRAVC (191 aa)).

It belongs to the PurK/PurT family. Homodimer.

It carries out the reaction 5-amino-1-(5-phospho-beta-D-ribosyl)imidazole + hydrogencarbonate + ATP = 5-carboxyamino-1-(5-phospho-D-ribosyl)imidazole + ADP + phosphate + 2 H(+). It participates in purine metabolism; IMP biosynthesis via de novo pathway; 5-amino-1-(5-phospho-D-ribosyl)imidazole-4-carboxylate from 5-amino-1-(5-phospho-D-ribosyl)imidazole (N5-CAIR route): step 1/2. Catalyzes the ATP-dependent conversion of 5-aminoimidazole ribonucleotide (AIR) and HCO(3)(-) to N5-carboxyaminoimidazole ribonucleotide (N5-CAIR). In Vibrio cholerae serotype O1 (strain ATCC 39315 / El Tor Inaba N16961), this protein is N5-carboxyaminoimidazole ribonucleotide synthase.